Consider the following 155-residue polypeptide: Ribosomal RNA large subunit methyltransferase H (155 aa).

Residues L72, G103, and 122–127 (LSPLTL) each bind S-adenosyl-L-methionine.

Belongs to the RNA methyltransferase RlmH family. In terms of assembly, homodimer.

The protein resides in the cytoplasm. The catalysed reaction is pseudouridine(1915) in 23S rRNA + S-adenosyl-L-methionine = N(3)-methylpseudouridine(1915) in 23S rRNA + S-adenosyl-L-homocysteine + H(+). Functionally, specifically methylates the pseudouridine at position 1915 (m3Psi1915) in 23S rRNA. This chain is Ribosomal RNA large subunit methyltransferase H, found in Pasteurella multocida (strain Pm70).